The sequence spans 430 residues: Inactive metallocarboxypeptidase ECM14 (430 aa).

Residues 1-24 (MLHMNSLWGCFLFVLLAVTGAVQG) form the signal peptide. Positions 25-105 (LQEDYSEYAV…TLPTSQMMAR (81 aa)) are excised as a propeptide. An N-linked (GlcNAc...) asparagine glycan is attached at asparagine 41. One can recognise a Peptidase M14 domain in the interval 120–425 (EYRDLDTIYM…AALKYFCDFL (306 aa)). Histidine 182 and glutamate 185 together coordinate Zn(2+). Substrate-binding positions include 182-185 (HARE), arginine 240, and 257-258 (DH). Cysteine 251 and cysteine 272 are joined by a disulfide. N-linked (GlcNAc...) asparagine glycosylation is present at asparagine 295. Histidine 310 contacts Zn(2+). A substrate-binding site is contributed by 311 to 312 (SY).

It belongs to the peptidase M14 family. Zn(2+) is required as a cofactor. In terms of processing, N-glycosylated.

It localises to the vacuole. Its subcellular location is the secreted. In terms of biological role, inactive carboxypeptidase that may play a role in cell wall organization and biogenesis. This chain is Inactive metallocarboxypeptidase ECM14, found in Saccharomyces cerevisiae (strain ATCC 204508 / S288c) (Baker's yeast).